A 478-amino-acid polypeptide reads, in one-letter code: Serine/threonine-protein phosphatase T (478 aa).

TPR repeat units follow at residues 9–42 (ATAL…YDRE), 43–76 (PSFF…DPAY), and 78–110 (KAYW…EPNN). The segment at 151-463 (AVDDSYDGVR…QVFEAVPHPD (313 aa)) is catalytic. Residues Asp221, His223, Asp250, and Asn282 each coordinate Mn(2+). His283 acts as the Proton donor/acceptor in catalysis. Residues His331 and His408 each coordinate Mn(2+).

Belongs to the PPP phosphatase family. PP-5 (PP-T) subfamily. Mg(2+) serves as cofactor. The cofactor is Mn(2+).

Its subcellular location is the nucleus. The enzyme catalyses O-phospho-L-seryl-[protein] + H2O = L-seryl-[protein] + phosphate. It carries out the reaction O-phospho-L-threonyl-[protein] + H2O = L-threonyl-[protein] + phosphate. Its function is as follows. Protein phosphatase that specifically binds to and dephosphorylates the molecular chaperone Hsp90. Dephosphorylation positively regulates the Hsp90 chaperone machinery. This chain is Serine/threonine-protein phosphatase T, found in Aspergillus oryzae (strain ATCC 42149 / RIB 40) (Yellow koji mold).